Here is a 236-residue protein sequence, read N- to C-terminus: Putative lipoprotein MlpA (236 aa).

The first 21 residues, 1–21 (MTKNIVNTALVLVGAGSLLTG), serve as a signal peptide directing secretion. A lipid anchor (N-palmitoyl cysteine) is attached at cysteine 22. Residue cysteine 22 is the site of S-diacylglycerol cysteine attachment.

Its subcellular location is the cell membrane. This is Putative lipoprotein MlpA (mlpA) from Myxococcus xanthus.